The following is a 277-amino-acid chain: Small ribosomal subunit protein uS2 (277 aa).

The disordered stretch occupies residues 247–277 (LSAFESSQDDESDEENREEDLLAKKFDGEAN). The span at 253 to 264 (SQDDESDEENRE) shows a compositional bias: acidic residues. A compositionally biased stretch (basic and acidic residues) spans 265 to 277 (EDLLAKKFDGEAN).

The protein belongs to the universal ribosomal protein uS2 family.

In Chlamydia pneumoniae (Chlamydophila pneumoniae), this protein is Small ribosomal subunit protein uS2 (rpsB).